The chain runs to 914 residues: Protein translocase subunit SecA (914 aa).

Residues Gln-87, 105 to 109 (GEGKT), and Asp-500 each bind ATP. Zn(2+) contacts are provided by Cys-898, Cys-900, Cys-909, and His-910.

The protein belongs to the SecA family. As to quaternary structure, monomer and homodimer. Part of the essential Sec protein translocation apparatus which comprises SecA, SecYEG and auxiliary proteins SecDF-YajC and YidC. It depends on Zn(2+) as a cofactor.

The protein localises to the cell inner membrane. Its subcellular location is the cytoplasm. The catalysed reaction is ATP + H2O + cellular proteinSide 1 = ADP + phosphate + cellular proteinSide 2.. Functionally, part of the Sec protein translocase complex. Interacts with the SecYEG preprotein conducting channel. Has a central role in coupling the hydrolysis of ATP to the transfer of proteins into and across the cell membrane, serving as an ATP-driven molecular motor driving the stepwise translocation of polypeptide chains across the membrane. This Acidithiobacillus ferrooxidans (strain ATCC 23270 / DSM 14882 / CIP 104768 / NCIMB 8455) (Ferrobacillus ferrooxidans (strain ATCC 23270)) protein is Protein translocase subunit SecA.